A 488-amino-acid polypeptide reads, in one-letter code: Malonate-semialdehyde dehydrogenase (488 aa).

Residues Ala-150, Phe-152, Lys-176, Glu-179, Arg-180, Ser-229, and Thr-251 each contribute to the NAD(+) site. The Nucleophile role is filled by Cys-284. Residue Glu-382 coordinates NAD(+).

It belongs to the aldehyde dehydrogenase family. IolA subfamily. As to quaternary structure, homotetramer.

It carries out the reaction 3-oxopropanoate + NAD(+) + CoA + H2O = hydrogencarbonate + acetyl-CoA + NADH + H(+). The enzyme catalyses 2-methyl-3-oxopropanoate + NAD(+) + CoA + H2O = propanoyl-CoA + hydrogencarbonate + NADH + H(+). Its pathway is polyol metabolism; myo-inositol degradation into acetyl-CoA; acetyl-CoA from myo-inositol: step 7/7. Functionally, catalyzes the oxidation of malonate semialdehyde (MSA) and methylmalonate semialdehyde (MMSA) into acetyl-CoA and propanoyl-CoA, respectively. Is involved in a myo-inositol catabolic pathway. Bicarbonate, and not CO2, is the end-product of the enzymatic reaction. This is Malonate-semialdehyde dehydrogenase from Listeria monocytogenes serotype 4a (strain HCC23).